Consider the following 940-residue polypeptide: Mitogen-activated protein kinase kinase kinase 10 (940 aa).

In terms of domain architecture, SH3 spans 16–81 (PAGPVWTAVF…PSNYVAPAAP (66 aa)). The 263-residue stretch at 98 to 360 (LQLEEIIGVG…GSILKQLEVI (263 aa)) folds into the Protein kinase domain. ATP-binding positions include 104–112 (IGVGGFGKV) and lysine 125. Catalysis depends on aspartate 222, which acts as the Proton acceptor. Position 258 is a phosphothreonine; by autocatalysis (threonine 258). Serine 262 carries the phosphoserine; by autocatalysis and MAP4K1 modification. 2 leucine-zipper regions span residues 384-405 (IQHM…EEEL) and 419-440 (LRRR…ELHL). Disordered regions lie at residues 490-599 (PTLD…MAPG), 687-734 (RAGD…GLAP), and 749-917 (STRS…QPTL). Phosphoserine is present on residues serine 498, serine 502, and serine 506. Over residues 501-511 (ASPPASPSIIP) the composition is skewed to low complexity. Residue threonine 552 is modified to Phosphothreonine. 2 stretches are compositionally biased toward basic and acidic residues: residues 560–572 (QKER…RLKA) and 687–698 (RAGDGEEQRRWL). Over residues 765–775 (APSPPPSPLAP) the composition is skewed to pro residues. Over residues 822 to 840 (LRQREPLELTNHGPRDPLD) the composition is skewed to basic and acidic residues. Arginine 843 is subject to Omega-N-methylarginine. Residues 899-913 (PSRPDTPESPGPPSV) are compositionally biased toward pro residues.

This sequence belongs to the protein kinase superfamily. STE Ser/Thr protein kinase family. MAP kinase kinase kinase subfamily. In terms of assembly, homodimer. Interacts with SH3RF2. Mg(2+) serves as cofactor. Autophosphorylation on serine and threonine residues within the activation loop plays a role in enzyme activation.

The catalysed reaction is L-seryl-[protein] + ATP = O-phospho-L-seryl-[protein] + ADP + H(+). It catalyses the reaction L-threonyl-[protein] + ATP = O-phospho-L-threonyl-[protein] + ADP + H(+). Its activity is regulated as follows. Homodimerization via the leucine zipper domains is required for autophosphorylation and subsequent activation. Activates the JUN N-terminal pathway. This chain is Mitogen-activated protein kinase kinase kinase 10 (Map3k10), found in Mus musculus (Mouse).